The sequence spans 485 residues: Glutamyl-tRNA(Gln) amidotransferase subunit A (485 aa).

Active-site charge relay system residues include K79 and S154. S178 functions as the Acyl-ester intermediate in the catalytic mechanism.

Belongs to the amidase family. GatA subfamily. As to quaternary structure, heterotrimer of A, B and C subunits.

It catalyses the reaction L-glutamyl-tRNA(Gln) + L-glutamine + ATP + H2O = L-glutaminyl-tRNA(Gln) + L-glutamate + ADP + phosphate + H(+). Its function is as follows. Allows the formation of correctly charged Gln-tRNA(Gln) through the transamidation of misacylated Glu-tRNA(Gln) in organisms which lack glutaminyl-tRNA synthetase. The reaction takes place in the presence of glutamine and ATP through an activated gamma-phospho-Glu-tRNA(Gln). The polypeptide is Glutamyl-tRNA(Gln) amidotransferase subunit A (Clostridium botulinum (strain Langeland / NCTC 10281 / Type F)).